The following is a 513-amino-acid chain: Histidine ammonia-lyase (513 aa).

A cross-link (5-imidazolinone (Ala-Gly)) is located at residues 144-146 (ASG). Position 145 is a 2,3-didehydroalanine (Ser) (Ser145).

The protein belongs to the PAL/histidase family. Contains an active site 4-methylidene-imidazol-5-one (MIO), which is formed autocatalytically by cyclization and dehydration of residues Ala-Ser-Gly.

The protein resides in the cytoplasm. It carries out the reaction L-histidine = trans-urocanate + NH4(+). It participates in amino-acid degradation; L-histidine degradation into L-glutamate; N-formimidoyl-L-glutamate from L-histidine: step 1/3. In Streptococcus sanguinis (strain SK36), this protein is Histidine ammonia-lyase.